An 88-amino-acid polypeptide reads, in one-letter code: U-scoloptoxin(XY)-Er1a (88 aa).

A signal peptide spans 1–24; it reads MASQVVLSFALVVVLAVFVGQVDS. The segment at 66-88 is disordered; that stretch reads RPELSPGAWDDSSEEKDNEASLA. Positions 79 to 88 are excised as a propeptide; it reads EEKDNEASLA.

This sequence belongs to the scoloptoxin-XY family. Contains 3 disulfide bonds. In terms of tissue distribution, expressed by the venom gland.

It localises to the secreted. This is U-scoloptoxin(XY)-Er1a from Ethmostigmus rubripes (Giant centipede).